The following is a 257-amino-acid chain: NAD-capped RNA hydrolase NudC (257 aa).

Residue Arg-69 participates in substrate binding. Zn(2+)-binding residues include Cys-98 and Cys-101. Glu-111 contacts substrate. 2 residues coordinate Zn(2+): Cys-116 and Cys-119. Residue Tyr-124 coordinates substrate. The Nudix hydrolase domain maps to 125 to 248 (PQIAPCIIVA…TVARRLIEDT (124 aa)). The a divalent metal cation site is built by Ala-158, Glu-174, and Glu-178. Residues 159–180 (GFVEVGETLEQAVAREVMEESG) carry the Nudix box motif. 192–199 (QPWPFPQS) is a binding site for substrate. Glu-219 is a binding site for a divalent metal cation. Ala-241 provides a ligand contact to substrate.

It belongs to the Nudix hydrolase family. NudC subfamily. Homodimer. The cofactor is Mg(2+). Mn(2+) is required as a cofactor. It depends on Zn(2+) as a cofactor.

It catalyses the reaction a 5'-end NAD(+)-phospho-ribonucleoside in mRNA + H2O = a 5'-end phospho-adenosine-phospho-ribonucleoside in mRNA + beta-nicotinamide D-ribonucleotide + 2 H(+). It carries out the reaction NAD(+) + H2O = beta-nicotinamide D-ribonucleotide + AMP + 2 H(+). The enzyme catalyses NADH + H2O = reduced beta-nicotinamide D-ribonucleotide + AMP + 2 H(+). Its function is as follows. mRNA decapping enzyme that specifically removes the nicotinamide adenine dinucleotide (NAD) cap from a subset of mRNAs by hydrolyzing the diphosphate linkage to produce nicotinamide mononucleotide (NMN) and 5' monophosphate mRNA. The NAD-cap is present at the 5'-end of some mRNAs and stabilizes RNA against 5'-processing. Has preference for mRNAs with a 5'-end purine. Catalyzes the hydrolysis of a broad range of dinucleotide pyrophosphates. The chain is NAD-capped RNA hydrolase NudC from Salmonella dublin (strain CT_02021853).